The primary structure comprises 251 residues: Aliphatic sulfonates import ATP-binding protein SsuB (251 aa).

An ABC transporter domain is found at 19 to 238; that stretch reads GELRHVDKWY…PGEPGAHTER (220 aa). An ATP-binding site is contributed by 51–58; it reads GRSGSGKS.

This sequence belongs to the ABC transporter superfamily. Aliphatic sulfonates importer (TC 3.A.1.17.2) family. The complex is composed of two ATP-binding proteins (SsuB), two transmembrane proteins (SsuC) and a solute-binding protein (SsuA).

Its subcellular location is the cell membrane. The catalysed reaction is ATP + H2O + aliphatic sulfonate-[sulfonate-binding protein]Side 1 = ADP + phosphate + aliphatic sulfonateSide 2 + [sulfonate-binding protein]Side 1.. Its function is as follows. Part of the ABC transporter complex SsuABC involved in aliphatic sulfonates import. Responsible for energy coupling to the transport system. The polypeptide is Aliphatic sulfonates import ATP-binding protein SsuB (Mycobacterium avium (strain 104)).